Consider the following 332-residue polypeptide: Glycerol-3-phosphate dehydrogenase [NAD(P)+] (332 aa).

NADPH-binding residues include W11, R30, and K108. Residues K108, G137, and S139 each coordinate sn-glycerol 3-phosphate. A141 lines the NADPH pocket. Residues K192, D245, S255, R256, and N257 each contribute to the sn-glycerol 3-phosphate site. The active-site Proton acceptor is K192. R256 is an NADPH binding site. The NADPH site is built by V280 and E282.

This sequence belongs to the NAD-dependent glycerol-3-phosphate dehydrogenase family.

It localises to the cytoplasm. The enzyme catalyses sn-glycerol 3-phosphate + NAD(+) = dihydroxyacetone phosphate + NADH + H(+). The catalysed reaction is sn-glycerol 3-phosphate + NADP(+) = dihydroxyacetone phosphate + NADPH + H(+). The protein operates within membrane lipid metabolism; glycerophospholipid metabolism. In terms of biological role, catalyzes the reduction of the glycolytic intermediate dihydroxyacetone phosphate (DHAP) to sn-glycerol 3-phosphate (G3P), the key precursor for phospholipid synthesis. In Burkholderia ambifaria (strain MC40-6), this protein is Glycerol-3-phosphate dehydrogenase [NAD(P)+].